A 396-amino-acid polypeptide reads, in one-letter code: S-adenosylmethionine synthase (396 aa).

His-16 contributes to the ATP binding site. Asp-18 is a Mg(2+) binding site. Residue Glu-44 coordinates K(+). L-methionine is bound by residues Glu-57 and Gln-100. A flexible loop region spans residues 100 to 110 (QSVDIAQGVDR). Residues 165 to 167 (DAK), Asp-240, 246 to 247 (RK), Ala-263, and Lys-267 contribute to the ATP site. Residue Asp-240 participates in L-methionine binding. L-methionine is bound at residue Lys-271.

It belongs to the AdoMet synthase family. As to quaternary structure, homotetramer; dimer of dimers. It depends on Mg(2+) as a cofactor. Requires K(+) as cofactor.

It localises to the cytoplasm. The enzyme catalyses L-methionine + ATP + H2O = S-adenosyl-L-methionine + phosphate + diphosphate. The protein operates within amino-acid biosynthesis; S-adenosyl-L-methionine biosynthesis; S-adenosyl-L-methionine from L-methionine: step 1/1. In terms of biological role, catalyzes the formation of S-adenosylmethionine (AdoMet) from methionine and ATP. The overall synthetic reaction is composed of two sequential steps, AdoMet formation and the subsequent tripolyphosphate hydrolysis which occurs prior to release of AdoMet from the enzyme. The chain is S-adenosylmethionine synthase from Pseudomonas putida (strain ATCC 700007 / DSM 6899 / JCM 31910 / BCRC 17059 / LMG 24140 / F1).